The sequence spans 388 residues: Carbamoyl phosphate synthase small chain (388 aa).

Residues 1–192 (MPLSDAMPAL…FNPDGTVKNG (192 aa)) are CPSase. L-glutamine contacts are provided by serine 51, glycine 244, and glycine 246. Residues 196 to 382 (TVVALDFGVK…VHQMRTTKQA (187 aa)) enclose the Glutamine amidotransferase type-1 domain. Cysteine 272 serves as the catalytic Nucleophile. Positions 273, 276, 312, and 315 each coordinate L-glutamine. Residues histidine 355 and glutamate 357 contribute to the active site.

This sequence belongs to the CarA family. Composed of two chains; the small (or glutamine) chain promotes the hydrolysis of glutamine to ammonia, which is used by the large (or ammonia) chain to synthesize carbamoyl phosphate. Tetramer of heterodimers (alpha,beta)4.

The catalysed reaction is hydrogencarbonate + L-glutamine + 2 ATP + H2O = carbamoyl phosphate + L-glutamate + 2 ADP + phosphate + 2 H(+). It catalyses the reaction L-glutamine + H2O = L-glutamate + NH4(+). It functions in the pathway amino-acid biosynthesis; L-arginine biosynthesis; carbamoyl phosphate from bicarbonate: step 1/1. The protein operates within pyrimidine metabolism; UMP biosynthesis via de novo pathway; (S)-dihydroorotate from bicarbonate: step 1/3. Small subunit of the glutamine-dependent carbamoyl phosphate synthetase (CPSase). CPSase catalyzes the formation of carbamoyl phosphate from the ammonia moiety of glutamine, carbonate, and phosphate donated by ATP, constituting the first step of 2 biosynthetic pathways, one leading to arginine and/or urea and the other to pyrimidine nucleotides. The small subunit (glutamine amidotransferase) binds and cleaves glutamine to supply the large subunit with the substrate ammonia. This chain is Carbamoyl phosphate synthase small chain, found in Nostoc sp. (strain PCC 7120 / SAG 25.82 / UTEX 2576).